A 239-amino-acid polypeptide reads, in one-letter code: NADH-quinone oxidoreductase chain 2 (239 aa).

[2Fe-2S] cluster is bound by residues cysteine 96, cysteine 101, cysteine 137, and cysteine 141.

It belongs to the complex I 24 kDa subunit family. In terms of assembly, NDH-1 is composed of at least 14 different subunits, Nqo1 to Nqo14. The complex has a L-shaped structure, with the hydrophobic arm (subunits Nqo7, Nqo8, Nqo10 to Nqo14) embedded in the inner membrane and the hydrophilic peripheral arm (subunits Nqo1 to Nqo6, Nqo9) protruding into the bacterial cytoplasm. The hydrophilic domain contains all the redox centers. [2Fe-2S] cluster is required as a cofactor.

The protein localises to the cell inner membrane. It catalyses the reaction a quinone + NADH + 5 H(+)(in) = a quinol + NAD(+) + 4 H(+)(out). Functionally, NDH-1 shuttles electrons from NADH, via FMN and iron-sulfur (Fe-S) centers, to quinones in the respiratory chain. The immediate electron acceptor for the enzyme in this species is believed to be ubiquinone. Couples the redox reaction to proton translocation (for every two electrons transferred, four hydrogen ions are translocated across the cytoplasmic membrane), and thus conserves the redox energy in a proton gradient. This chain is NADH-quinone oxidoreductase chain 2 (nqo2), found in Paracoccus denitrificans.